The sequence spans 261 residues: Cytochrome c oxidase subunit 3 (261 aa).

Residues 1-15 (MTHQTHAYHMVNPSP) are Mitochondrial matrix-facing. A helical transmembrane segment spans residues 16–34 (WPLTGAMSALLLTSGLIMW). Over 35–40 (FHFNSY) the chain is Mitochondrial intermembrane. A helical transmembrane segment spans residues 41–66 (TLLLLGLLTNLISSYQWWRDIVREGT). The Mitochondrial matrix portion of the chain corresponds to 67–72 (YQGHHT). A helical membrane pass occupies residues 73 to 105 (KIVQKGLRYGMILFIISEVFFFLGFFWAFYHSS). Over 106-128 (LAPTPELGGCWPPTGISPLNPLE) the chain is Mitochondrial intermembrane. The helical transmembrane segment at 129–152 (VPLLNTSILLASGVSITWAHHSLM) threads the bilayer. Over 153–155 (EGN) the chain is Mitochondrial matrix. Residues 156–183 (RKQMLQALTITIALGLYFTALQAMEYYE) form a helical membrane-spanning segment. Topologically, residues 184–190 (ASFTISD) are mitochondrial intermembrane. Residues 191-223 (GVYGSTFFVATGFHGLHVIIGTTFLITCLVRQT) form a helical membrane-spanning segment. The Mitochondrial matrix portion of the chain corresponds to 224-232 (LYHFTSNHH). A helical membrane pass occupies residues 233–256 (FGFEAAAWYWHFVDVVWLFLYVSI). Residues 257-261 (YWWGS) are Mitochondrial intermembrane-facing.

It belongs to the cytochrome c oxidase subunit 3 family. As to quaternary structure, component of the cytochrome c oxidase (complex IV, CIV), a multisubunit enzyme composed of 14 subunits. The complex is composed of a catalytic core of 3 subunits MT-CO1, MT-CO2 and MT-CO3, encoded in the mitochondrial DNA, and 11 supernumerary subunits COX4I, COX5A, COX5B, COX6A, COX6B, COX6C, COX7A, COX7B, COX7C, COX8 and NDUFA4, which are encoded in the nuclear genome. The complex exists as a monomer or a dimer and forms supercomplexes (SCs) in the inner mitochondrial membrane with NADH-ubiquinone oxidoreductase (complex I, CI) and ubiquinol-cytochrome c oxidoreductase (cytochrome b-c1 complex, complex III, CIII), resulting in different assemblies (supercomplex SCI(1)III(2)IV(1) and megacomplex MCI(2)III(2)IV(2)).

The protein localises to the mitochondrion inner membrane. The catalysed reaction is 4 Fe(II)-[cytochrome c] + O2 + 8 H(+)(in) = 4 Fe(III)-[cytochrome c] + 2 H2O + 4 H(+)(out). In terms of biological role, component of the cytochrome c oxidase, the last enzyme in the mitochondrial electron transport chain which drives oxidative phosphorylation. The respiratory chain contains 3 multisubunit complexes succinate dehydrogenase (complex II, CII), ubiquinol-cytochrome c oxidoreductase (cytochrome b-c1 complex, complex III, CIII) and cytochrome c oxidase (complex IV, CIV), that cooperate to transfer electrons derived from NADH and succinate to molecular oxygen, creating an electrochemical gradient over the inner membrane that drives transmembrane transport and the ATP synthase. Cytochrome c oxidase is the component of the respiratory chain that catalyzes the reduction of oxygen to water. Electrons originating from reduced cytochrome c in the intermembrane space (IMS) are transferred via the dinuclear copper A center (CU(A)) of subunit 2 and heme A of subunit 1 to the active site in subunit 1, a binuclear center (BNC) formed by heme A3 and copper B (CU(B)). The BNC reduces molecular oxygen to 2 water molecules using 4 electrons from cytochrome c in the IMS and 4 protons from the mitochondrial matrix. This is Cytochrome c oxidase subunit 3 (MT-CO3) from Ornithorhynchus anatinus (Duckbill platypus).